Consider the following 298-residue polypeptide: NADH-cytochrome b5 reductase 2 (298 aa).

The chain crosses the membrane as a helical span at residues 13–33 (FLPFAIGAVAVTAGALYLNGW). Residues 48–152 (RKWIDLELEK…QGPIPKWQWK (105 aa)) enclose the FAD-binding FR-type domain. 155–190 (SFDTITLLGGGTGITPLYQLVHHITQNKEDKTKINL) is a binding site for FAD.

It belongs to the flavoprotein pyridine nucleotide cytochrome reductase family. It depends on FAD as a cofactor.

Its subcellular location is the mitochondrion outer membrane. It carries out the reaction 2 Fe(III)-[cytochrome b5] + NADH = 2 Fe(II)-[cytochrome b5] + NAD(+) + H(+). Functionally, may mediate the reduction of outer membrane cytochrome b5. The sequence is that of NADH-cytochrome b5 reductase 2 (MCR1) from Candida glabrata (strain ATCC 2001 / BCRC 20586 / JCM 3761 / NBRC 0622 / NRRL Y-65 / CBS 138) (Yeast).